The sequence spans 90 residues: UPF0367 protein PMT9312_0127 (90 aa).

This sequence belongs to the UPF0367 family.

This chain is UPF0367 protein PMT9312_0127, found in Prochlorococcus marinus (strain MIT 9312).